The following is a 105-amino-acid chain: Insulin-like peptide 7 (105 aa).

A signal peptide spans 1–18 (MPPIILVFFLVLIPASQQ). A propeptide spanning residues 19–57 (YPFSLESLNDQIINEEVIEYMLENSIRSSRTRRVPDEKK) is cleaved from the precursor. 4 disulfide bridges follow: Cys-61-Cys-90, Cys-73-Cys-103, Cys-77-Cys-104, and Cys-89-Cys-94.

It belongs to the insulin family.

It is found in the secreted. Its function is as follows. Insulin-like peptide which plays a role in ageing as a consequence of daf-16 activity. In Caenorhabditis elegans, this protein is Insulin-like peptide 7.